A 525-amino-acid polypeptide reads, in one-letter code: MSCLKYFLILLMLGLCVSSEENFQYDYLKVPASEFVSSINTIVVVIRQVSSILSQFADFSGDRRLQNAVSDCLDLLDFSSEELTWSASASENPKGKGNGTGDVGSDTRTWLSAALSNQATCMEGFDGTSGLVKSLVAGSLDQLYSMLRELLPLVQPEQKPKAVSKPGPIAKGPKAPPGRKLRDTDEDESLQFPDWVRPDDRKLLESNGRTYDVSVALDGTGNFTKIMDAIKKAPDYSSTRFVIYIKKGLYLENVEIKKKKWNIVMLGDGIDVTVISGNRSFIDGWTTFRSATFAVSGRGFLARDITFQNTAGPEKHQAVALRSDSDLSVFFRCAMRGYQDTLYTHTMRQFYRECTITGTVDFIFGDGTVVFQNCQILAKRGLPNQKNTITAQGRKDVNQPSGFSIQFSNISADADLVPYLNTTRTYLGRPWKLYSRTVFIRNNMSDVVRPEGWLEWNADFALDTLFYGEFMNYGPGSGLSSRVKWPGYHVFNNSDQANNFTVSQFIKGNLWLPSTGVTFSDGLYI.

Residues 1-19 (MSCLKYFLILLMLGLCVSS) form the signal peptide. A pectinesterase inhibitor 44 region spans residues 30 to 153 (VPASEFVSSI…YSMLRELLPL (124 aa)). Asn98 is a glycosylation site (N-linked (GlcNAc...) asparagine). The disordered stretch occupies residues 157 to 192 (EQKPKAVSKPGPIAKGPKAPPGRKLRDTDEDESLQF). Residues 212–509 (DVSVALDGTG…FTVSQFIKGN (298 aa)) are pectinesterase 44. N-linked (GlcNAc...) asparagine glycans are attached at residues Asn222 and Asn278. 2 residues coordinate substrate: Thr287 and Gln317. Asp340 serves as the catalytic Proton donor; for pectinesterase activity. Cysteines 354 and 374 form a disulfide. Residue Asp361 is the Nucleophile; for pectinesterase activity of the active site. N-linked (GlcNAc...) asparagine glycosylation is found at Asn409 and Asn421. Residues Arg429 and Trp431 each contribute to the substrate site. Residues Asn443, Asn492, and Asn499 are each glycosylated (N-linked (GlcNAc...) asparagine).

In the N-terminal section; belongs to the PMEI family. The protein in the C-terminal section; belongs to the pectinesterase family. As to expression, expressed in siliques.

The protein resides in the secreted. It is found in the cell wall. The catalysed reaction is [(1-&gt;4)-alpha-D-galacturonosyl methyl ester](n) + n H2O = [(1-&gt;4)-alpha-D-galacturonosyl](n) + n methanol + n H(+). It participates in glycan metabolism; pectin degradation; 2-dehydro-3-deoxy-D-gluconate from pectin: step 1/5. In terms of biological role, acts in the modification of cell walls via demethylesterification of cell wall pectin. The sequence is that of Probable pectinesterase/pectinesterase inhibitor 44 (PME44) from Arabidopsis thaliana (Mouse-ear cress).